We begin with the raw amino-acid sequence, 350 residues long: Pleckstrin (350 aa).

Residues 4–101 (KRIREGYLVK…WVRDIKKAIK (98 aa)) enclose the PH 1 domain. The residue at position 64 (Lys-64) is an N6-acetyllysine. Ser-113 and Ser-117 each carry phosphoserine. A DEP domain is found at 136 to 221 (PEKGIKELNL…NPDAFYYFPD (86 aa)). The 104-residue stretch at 244-347 (IIIKQGCLLK…WIKAIQVASR (104 aa)) folds into the PH 2 domain.

Functionally, major protein kinase C substrate of platelets. The chain is Pleckstrin (Plek) from Rattus norvegicus (Rat).